The sequence spans 234 residues: tRNA (guanine-N(1)-)-methyltransferase (234 aa).

Gly-113 lines the S-adenosyl-L-methionine pocket.

This sequence belongs to the RNA methyltransferase TrmD family. Homodimer.

It is found in the cytoplasm. It catalyses the reaction guanosine(37) in tRNA + S-adenosyl-L-methionine = N(1)-methylguanosine(37) in tRNA + S-adenosyl-L-homocysteine + H(+). Its function is as follows. Specifically methylates guanosine-37 in various tRNAs. This chain is tRNA (guanine-N(1)-)-methyltransferase, found in Gluconobacter oxydans (strain 621H) (Gluconobacter suboxydans).